We begin with the raw amino-acid sequence, 583 residues long: Threonine--tRNA ligase (583 aa).

Residues 185–478 (DHRKLGRELN…LVEHYGGAFP (294 aa)) form a catalytic region. Residues cysteine 278, histidine 329, and histidine 455 each contribute to the Zn(2+) site.

The protein belongs to the class-II aminoacyl-tRNA synthetase family. As to quaternary structure, homodimer. Zn(2+) is required as a cofactor.

Its subcellular location is the cytoplasm. It carries out the reaction tRNA(Thr) + L-threonine + ATP = L-threonyl-tRNA(Thr) + AMP + diphosphate + H(+). Catalyzes the attachment of threonine to tRNA(Thr) in a two-step reaction: L-threonine is first activated by ATP to form Thr-AMP and then transferred to the acceptor end of tRNA(Thr). Also edits incorrectly charged L-seryl-tRNA(Thr). The polypeptide is Threonine--tRNA ligase (Borrelia recurrentis (strain A1)).